Here is a 276-residue protein sequence, read N- to C-terminus: Ribonuclease T2 (276 aa).

An N-terminal signal peptide occupies residues 1–17 (MGMLALGAMQLAAGAVF). Intrachain disulfides connect Cys-22-Cys-41, Cys-30-Cys-77, Cys-40-Cys-143, Cys-85-Cys-135, and Cys-208-Cys-242. A glycan (N-linked (GlcNAc...) asparagine) is linked at Asn-32. Residue His-70 is part of the active site. A glycan (N-linked (GlcNAc...) asparagine) is linked at Asn-93. Active-site residues include Glu-128 and His-132. A glycan (N-linked (GlcNAc...) asparagine) is linked at Asn-256.

The protein belongs to the RNase T2 family.

The enzyme catalyses a ribonucleotidyl-ribonucleotide-RNA + H2O = a 3'-end 3'-phospho-ribonucleotide-RNA + a 5'-end dephospho-ribonucleoside-RNA + H(+). This is Ribonuclease T2 (rntB) from Aspergillus oryzae (strain ATCC 42149 / RIB 40) (Yellow koji mold).